Reading from the N-terminus, the 268-residue chain is Tryptophan synthase alpha chain (268 aa).

Catalysis depends on proton acceptor residues E49 and D60.

The protein belongs to the TrpA family. As to quaternary structure, tetramer of two alpha and two beta chains.

It carries out the reaction (1S,2R)-1-C-(indol-3-yl)glycerol 3-phosphate + L-serine = D-glyceraldehyde 3-phosphate + L-tryptophan + H2O. The protein operates within amino-acid biosynthesis; L-tryptophan biosynthesis; L-tryptophan from chorismate: step 5/5. The alpha subunit is responsible for the aldol cleavage of indoleglycerol phosphate to indole and glyceraldehyde 3-phosphate. In Salmonella choleraesuis (strain SC-B67), this protein is Tryptophan synthase alpha chain.